A 291-amino-acid polypeptide reads, in one-letter code: N-acetylmannosamine kinase (291 aa).

ATP is bound by residues 5–12 and 132–139; these read AIDIGGTK and GVGGGVVS. Zn(2+)-binding residues include histidine 156, cysteine 166, cysteine 168, and cysteine 173.

It belongs to the ROK (NagC/XylR) family. NanK subfamily. As to quaternary structure, homodimer.

The catalysed reaction is an N-acyl-D-mannosamine + ATP = an N-acyl-D-mannosamine 6-phosphate + ADP + H(+). The protein operates within amino-sugar metabolism; N-acetylneuraminate degradation; D-fructose 6-phosphate from N-acetylneuraminate: step 2/5. Its function is as follows. Catalyzes the phosphorylation of N-acetylmannosamine (ManNAc) to ManNAc-6-P. This is N-acetylmannosamine kinase from Escherichia coli (strain K12 / MC4100 / BW2952).